A 159-amino-acid chain; its full sequence is Protein Smg homolog (159 aa).

This sequence belongs to the Smg family.

This chain is Protein Smg homolog, found in Vibrio parahaemolyticus serotype O3:K6 (strain RIMD 2210633).